The primary structure comprises 184 residues: MPQTLFFVTSNASKLAEVSAILAASGISVQSMALDLPELQGSIEDISKDKAKRAAEAIGGPVLVEDTCLCFNALKGLPGPYIKWFMKDLGHEGLVNMLAAYEDKSAQAVCTFAHCEGPGKEPVLFQGRTDGKIVPPRGPAKFGWDPIFEYEGQTYAEMDKAAKNLISHRFKALEMLKEWMEAHP.

9–14 provides a ligand contact to ITP; sequence TSNASK. Glu38 serves as a coordination point for Mg(2+). Residues Lys50, 66-67, Lys83, 142-145, Lys163, and 168-169 each bind ITP; these read DT, FGWD, and HR.

Belongs to the HAM1 NTPase family. Homodimer. It depends on Mg(2+) as a cofactor. Requires Mn(2+) as cofactor.

Its subcellular location is the cytoplasm. The protein localises to the nucleus. It catalyses the reaction ITP + H2O = IMP + diphosphate + H(+). The catalysed reaction is dITP + H2O = dIMP + diphosphate + H(+). It carries out the reaction XTP + H2O = XMP + diphosphate + H(+). In terms of biological role, pyrophosphatase that hydrolyzes non-canonical purine nucleotides such as inosine triphosphate (ITP), deoxyinosine triphosphate (dITP) or xanthosine 5'-triphosphate (XTP) to their respective monophosphate derivatives. The enzyme does not distinguish between the deoxy- and ribose forms. Probably excludes non-canonical purines from RNA and DNA precursor pools, thus preventing their incorporation into RNA and DNA and avoiding chromosomal lesions. This is Inosine triphosphate pyrophosphatase from Tuber melanosporum (strain Mel28) (Perigord black truffle).